Here is an 89-residue protein sequence, read N- to C-terminus: Small ribosomal subunit protein uS15 (89 aa).

This sequence belongs to the universal ribosomal protein uS15 family. As to quaternary structure, part of the 30S ribosomal subunit. Forms a bridge to the 50S subunit in the 70S ribosome, contacting the 23S rRNA.

Its function is as follows. One of the primary rRNA binding proteins, it binds directly to 16S rRNA where it helps nucleate assembly of the platform of the 30S subunit by binding and bridging several RNA helices of the 16S rRNA. Forms an intersubunit bridge (bridge B4) with the 23S rRNA of the 50S subunit in the ribosome. The chain is Small ribosomal subunit protein uS15 from Sulfurovum sp. (strain NBC37-1).